A 168-amino-acid polypeptide reads, in one-letter code: Large ribosomal subunit protein uL10 (168 aa).

The protein belongs to the universal ribosomal protein uL10 family. As to quaternary structure, part of the ribosomal stalk of the 50S ribosomal subunit. The N-terminus interacts with L11 and the large rRNA to form the base of the stalk. The C-terminus forms an elongated spine to which L12 dimers bind in a sequential fashion forming a multimeric L10(L12)X complex.

In terms of biological role, forms part of the ribosomal stalk, playing a central role in the interaction of the ribosome with GTP-bound translation factors. This chain is Large ribosomal subunit protein uL10, found in Photorhabdus laumondii subsp. laumondii (strain DSM 15139 / CIP 105565 / TT01) (Photorhabdus luminescens subsp. laumondii).